Consider the following 312-residue polypeptide: Tyrosine recombinase XerC (312 aa).

The 103-residue stretch at 1 to 103 (MIASIYSFLD…SIKSFAHYCV (103 aa)) folds into the Core-binding (CB) domain. The Tyr recombinase domain occupies 124–306 (ELPSPMTYAQ…SVKLKKQTHQ (183 aa)). Active-site residues include Arg164, Lys188, His258, Arg261, and His284. Residue Tyr293 is the O-(3'-phospho-DNA)-tyrosine intermediate of the active site.

The protein belongs to the 'phage' integrase family. XerC subfamily. In terms of assembly, forms a cyclic heterotetrameric complex composed of two molecules of XerC and two molecules of XerD.

It is found in the cytoplasm. Functionally, site-specific tyrosine recombinase, which acts by catalyzing the cutting and rejoining of the recombining DNA molecules. The XerC-XerD complex is essential to convert dimers of the bacterial chromosome into monomers to permit their segregation at cell division. It also contributes to the segregational stability of plasmids. The protein is Tyrosine recombinase XerC of Chlamydia pneumoniae (Chlamydophila pneumoniae).